Consider the following 58-residue polypeptide: UPF0391 membrane protein Sbal195_1447 (58 aa).

2 helical membrane-spanning segments follow: residues 6–26 (LVFL…IAGA) and 28–48 (AGIA…SLLV).

This sequence belongs to the UPF0391 family.

Its subcellular location is the cell membrane. This Shewanella baltica (strain OS195) protein is UPF0391 membrane protein Sbal195_1447.